Here is a 135-residue protein sequence, read N- to C-terminus: uncharacterized protein (135 aa).

The region spanning 8 to 123 is the HotDog ACOT-type domain; that stretch reads PKGKMVLRTL…IFVYVAVDEF (116 aa).

It belongs to the acyl coenzyme A hydrolase family.

This is an uncharacterized protein from Buchnera aphidicola subsp. Baizongia pistaciae (strain Bp).